The chain runs to 178 residues: Major urinary protein 4 (178 aa).

A signal peptide spans 1–16; that stretch reads MKLLLCLGLTLVCIHA. Cys80 and Cys173 are joined by a disulfide.

Belongs to the calycin superfamily. Lipocalin family. In terms of tissue distribution, expressed in lacrimal gland, parotid gland, sublingual gland, nasal mucus, and vomeronasal organ.

Its subcellular location is the secreted. Its function is as follows. Binds pheromones, likely to displace pheromones complexed to urinary MUPs and transport them to the vomeronasal organ (VNO) where they associate with their neuronal receptor(s). MUP4 is highly specific for the male mouse pheromone 2-sec-butyl-4,5-dihydrothiazole (SBT). The protein is Major urinary protein 4 (Mup4) of Mus musculus (Mouse).